Consider the following 947-residue polypeptide: Testis-expressed protein 11 (947 aa).

This sequence belongs to the SPO22 family. In terms of assembly, interacts with SYCP2. Interacts with PBXIP1; may prevent interaction between PBXIP1 and ESR2. Interacts with SHOC1. Interacts with REDIC1. In terms of tissue distribution, testis-specific.

It localises to the chromosome. Regulator of crossing-over during meiosis. Involved in initiation and/or maintenance of chromosome synapsis and formation of crossovers. The protein is Testis-expressed protein 11 (Tex11) of Mus musculus (Mouse).